A 305-amino-acid polypeptide reads, in one-letter code: MSEFNITETYLRFLEEDTEMTMPIAAIEALVTLLRIKTPETAAEMINTIKSSTEELIKSIPNSVSLRAGCDIFMRFVLRNLHLYGDWENCKQHLIENGQLFVSRAKKSRNKIAEIGVDFIADDDIILVHGYSRAVFSLLNHAANKFIRFRCVVTESRPSKQGNQLYTLLEQKGIPVTLIVDSAVGAVIDKVDKVFVGAEGVAESGGIINLVGTYSVGVLAHNARKPFYVVTESHKFVRMFPLSSDDLPMAGPPLDFTRRTDDLEDALRGPTIDYTAQEYITALITDLGVLTPSAVSEELIKMWYD.

S2 is modified (N-acetylserine). T291 carries the post-translational modification Phosphothreonine.

This sequence belongs to the eIF-2B alpha/beta/delta subunits family. In terms of assembly, component of the translation initiation factor 2B (eIF2B) complex which is a heterodecamer of two sets of five different subunits: alpha, beta, gamma, delta and epsilon. Subunits alpha, beta and delta comprise a regulatory subcomplex and subunits epsilon and gamma comprise a catalytic subcomplex. Within the complex, the hexameric regulatory complex resides at the center, with the two heterodimeric catalytic subcomplexes bound on opposite sides.

The protein localises to the cytoplasm. Its subcellular location is the cytosol. Functionally, acts as a component of the translation initiation factor 2B (eIF2B) complex, which catalyzes the exchange of GDP for GTP on the eukaryotic initiation factor 2 (eIF2) complex gamma subunit. Its guanine nucleotide exchange factor activity is repressed when bound to eIF2 complex phosphorylated on the alpha subunit, thereby limiting the amount of methionyl-initiator methionine tRNA available to the ribosome and consequently global translation is repressed. It activates the translation of GCN4 in response to low amino acid, carbon, or purine availability, by suppressing the inhibitory effects of multiple uORFs present in the leader of GCN4 mRNA. It may promote either repression or activation of GCN4 expression depending on amino acid availability. Modulation of GCN3 regulatory function in response to amino acid availability occurs post-translationally. The chain is Translation initiation factor eIF2B subunit alpha from Saccharomyces cerevisiae (strain ATCC 204508 / S288c) (Baker's yeast).